The primary structure comprises 208 residues: uncharacterized protein (208 aa).

An N-terminal signal peptide occupies residues 1–16 (MTRVALLTTGRELSQA). Disordered regions lie at residues 1 to 95 (MTRV…VRGQ) and 145 to 176 (RVTKVSSSGPNSTPLPAARIGPGTNNAPSAAD). A compositionally biased stretch (low complexity) spans 16–25 (AAPPARARTP). Basic and acidic residues predominate over residues 32–43 (RGERPDDGGHAP). A compositionally biased stretch (basic residues) spans 44-54 (HRDRRVNQRRR). Residues 55 to 95 (QVGDRRAQRGVDEHPWRRPDERPNDHLPQRNSERPEGVRGQ) show a composition bias toward basic and acidic residues. Composition is skewed to polar residues over residues 148 to 158 (KVSSSGPNSTP) and 167 to 176 (GTNNAPSAAD).

This is an uncharacterized protein from Mycobacterium tuberculosis (strain CDC 1551 / Oshkosh).